The chain runs to 143 residues: Transcriptional regulator MraZ (143 aa).

SpoVT-AbrB domains lie at 5–47 and 76–119; these read EYLH…PLDE and ATEC…SQAL.

This sequence belongs to the MraZ family. As to quaternary structure, forms oligomers.

The protein resides in the cytoplasm. It is found in the nucleoid. The protein is Transcriptional regulator MraZ of Desulfitobacterium hafniense (strain DSM 10664 / DCB-2).